A 137-amino-acid chain; its full sequence is Nuclear transition protein 2 (137 aa).

Polar residues predominate over residues Met1 to Pro21. Positions Met1 to Asn137 are disordered. His12, His16, His24, Cys29, Cys31, Cys35, and Cys38 together coordinate Zn(2+). The segment covering Gln22–Pro74 has biased composition (low complexity). The span at Pro78 to Pro91 shows a compositional bias: basic residues. The short motif at Gly110 to Ile118 is the Nuclear localization signal element. A compositionally biased stretch (basic residues) spans Lys126–Asn137. Ser132 is modified (phosphoserine).

This sequence belongs to the nuclear transition protein 2 family. In terms of tissue distribution, testis. Expression is restricted to haploid germ cells.

The protein resides in the nucleus. Its subcellular location is the nucleolus. The protein localises to the chromosome. Functionally, plays a key role in the replacement of histones to protamine in the elongating spermatids of mammals. In condensing spermatids, loaded onto the nucleosomes, where it promotes the recruitment and processing of protamines, which are responsible for histone eviction. This is Nuclear transition protein 2 (TNP2) from Sus scrofa (Pig).